Here is a 269-residue protein sequence, read N- to C-terminus: Imidazoleglycerol-phosphate dehydratase 2, chloroplastic (269 aa).

A chloroplast-targeting transit peptide spans 1–51; that stretch reads MTTAPFLFPSLSRLHSARASSFPKPPVGSGAGVAFPARPYGSSLRLRSSVM. Substrate contacts are provided by residues E83, 109 to 117, 135 to 139, R161, and R183; these read HMLDQLASH and HHSNE. Positions 109, 135, 136, and 139 each coordinate Mn(2+). Residues H207, H231, H232, and E235 each coordinate Mn(2+). Substrate-binding positions include 231–239 and 261–263; these read HHIIEATFK and SSK.

This sequence belongs to the imidazoleglycerol-phosphate dehydratase family. Requires Mn(2+) as cofactor.

Its subcellular location is the plastid. It localises to the chloroplast. The catalysed reaction is D-erythro-1-(imidazol-4-yl)glycerol 3-phosphate = 3-(imidazol-4-yl)-2-oxopropyl phosphate + H2O. The protein operates within amino-acid biosynthesis; L-histidine biosynthesis; L-histidine from 5-phospho-alpha-D-ribose 1-diphosphate: step 6/9. The polypeptide is Imidazoleglycerol-phosphate dehydratase 2, chloroplastic (Triticum aestivum (Wheat)).